A 459-amino-acid chain; its full sequence is Bifunctional protein GlmU (459 aa).

Residues 1-229 (MSNFAIILAA…FDESLGVNDR (229 aa)) are pyrophosphorylase. UDP-N-acetyl-alpha-D-glucosamine is bound by residues 8-11 (LAAG), K22, Q72, and 77-78 (GT). Mg(2+) is bound at residue D102. Residues G139, E154, N169, and N227 each contribute to the UDP-N-acetyl-alpha-D-glucosamine site. N227 is a Mg(2+) binding site. Positions 230 to 250 (VALATAESVMRRRINHKHMVN) are linker. Residues 251–459 (GVSFVNPEAT…TRLPHHPKNQ (209 aa)) form an N-acetyltransferase region. R332 and K350 together coordinate UDP-N-acetyl-alpha-D-glucosamine. Catalysis depends on H362, which acts as the Proton acceptor. Y365 and N376 together coordinate UDP-N-acetyl-alpha-D-glucosamine. Residues A379, 385 to 386 (NY), S404, A422, and R439 contribute to the acetyl-CoA site.

The protein in the N-terminal section; belongs to the N-acetylglucosamine-1-phosphate uridyltransferase family. It in the C-terminal section; belongs to the transferase hexapeptide repeat family. Homotrimer. Mg(2+) serves as cofactor.

The protein localises to the cytoplasm. It carries out the reaction alpha-D-glucosamine 1-phosphate + acetyl-CoA = N-acetyl-alpha-D-glucosamine 1-phosphate + CoA + H(+). It catalyses the reaction N-acetyl-alpha-D-glucosamine 1-phosphate + UTP + H(+) = UDP-N-acetyl-alpha-D-glucosamine + diphosphate. It functions in the pathway nucleotide-sugar biosynthesis; UDP-N-acetyl-alpha-D-glucosamine biosynthesis; N-acetyl-alpha-D-glucosamine 1-phosphate from alpha-D-glucosamine 6-phosphate (route II): step 2/2. Its pathway is nucleotide-sugar biosynthesis; UDP-N-acetyl-alpha-D-glucosamine biosynthesis; UDP-N-acetyl-alpha-D-glucosamine from N-acetyl-alpha-D-glucosamine 1-phosphate: step 1/1. It participates in bacterial outer membrane biogenesis; LPS lipid A biosynthesis. Its function is as follows. Catalyzes the last two sequential reactions in the de novo biosynthetic pathway for UDP-N-acetylglucosamine (UDP-GlcNAc). The C-terminal domain catalyzes the transfer of acetyl group from acetyl coenzyme A to glucosamine-1-phosphate (GlcN-1-P) to produce N-acetylglucosamine-1-phosphate (GlcNAc-1-P), which is converted into UDP-GlcNAc by the transfer of uridine 5-monophosphate (from uridine 5-triphosphate), a reaction catalyzed by the N-terminal domain. The sequence is that of Bifunctional protein GlmU from Streptococcus pneumoniae (strain 70585).